The following is a 231-amino-acid chain: LexA repressor (231 aa).

The segment at residues 31 to 51 (RAEIATEFGFRSANAAEEHLQ) is a DNA-binding region (H-T-H motif). Active-site for autocatalytic cleavage activity residues include S148 and K185.

The protein belongs to the peptidase S24 family. Homodimer.

It catalyses the reaction Hydrolysis of Ala-|-Gly bond in repressor LexA.. Its function is as follows. Represses a number of genes involved in the response to DNA damage (SOS response), including recA and lexA. In the presence of single-stranded DNA, RecA interacts with LexA causing an autocatalytic cleavage which disrupts the DNA-binding part of LexA, leading to derepression of the SOS regulon and eventually DNA repair. This chain is LexA repressor, found in Leptothrix cholodnii (strain ATCC 51168 / LMG 8142 / SP-6) (Leptothrix discophora (strain SP-6)).